Reading from the N-terminus, the 389-residue chain is WAT1-related protein At1g21890 (389 aa).

Helical transmembrane passes span 13–33 (LAMI…MVSL), 40–60 (YVLA…FALF), 73–93 (IFLQ…NLYY), 102–122 (TFAS…AIIF), 142–162 (VITV…VDFI), 191–211 (WIPG…FFIL), 225–245 (LTTL…LVTV), 260–280 (FAAA…QGVV), 287–307 (VFVA…GVVV), and 312–332 (IHLG…TVVW). 2 consecutive EamA domains span residues 23–150 (AGMY…GALL) and 205–331 (WAGF…YTVV). The tract at residues 339–361 (RMTDDDEDCKGLPIKSPVKPVDT) is disordered.

It belongs to the drug/metabolite transporter (DMT) superfamily. Plant drug/metabolite exporter (P-DME) (TC 2.A.7.4) family.

It is found in the membrane. The polypeptide is WAT1-related protein At1g21890 (Arabidopsis thaliana (Mouse-ear cress)).